The following is a 415-amino-acid chain: Homoserine O-succinyltransferase (415 aa).

The 315-residue stretch at 69-383 (NAVLVCHALN…PHGHDAFLLD (315 aa)) folds into the AB hydrolase-1 domain. Ser-175 (nucleophile) is an active-site residue. Substrate is bound at residue Arg-245. Active-site residues include Asp-344 and His-377. Asp-378 is a binding site for substrate.

It belongs to the AB hydrolase superfamily. MetX family. As to quaternary structure, homodimer.

It is found in the cytoplasm. It carries out the reaction L-homoserine + succinyl-CoA = O-succinyl-L-homoserine + CoA. The protein operates within amino-acid biosynthesis; L-methionine biosynthesis via de novo pathway; O-succinyl-L-homoserine from L-homoserine: step 1/1. In terms of biological role, transfers a succinyl group from succinyl-CoA to L-homoserine, forming succinyl-L-homoserine. The polypeptide is Homoserine O-succinyltransferase (Bordetella pertussis (strain Tohama I / ATCC BAA-589 / NCTC 13251)).